Here is a 330-residue protein sequence, read N- to C-terminus: BTB/POZ domain-containing adapter for CUL3-mediated RhoA degradation protein 1 (330 aa).

Positions 1–34 (MSAEASGSSGGHAVTVSGSSPSSSSHVGEEKPGR) are disordered. Residues 40–108 (KYVKLNVGGT…LRDGTVPLPD (69 aa)) form the BTB domain. A compositionally biased stretch (low complexity) spans 282–291 (GGVSSSGAGQ). Residues 282–304 (GGVSSSGAGQSEEEGAGAGGGDR) are disordered.

This sequence belongs to the BACURD family.

The protein localises to the nucleus. Its function is as follows. Substrate-specific adapter of a BCR (BTB-CUL3-RBX1) E3 ubiquitin-protein ligase complex required for synaptic transmission. The BCR(KCTD13) E3 ubiquitin ligase complex mediates the ubiquitination of RHOA, leading to its degradation by the proteasome, thereby regulating the actin cytoskeleton and promoting synaptic transmission. This chain is BTB/POZ domain-containing adapter for CUL3-mediated RhoA degradation protein 1, found in Danio rerio (Zebrafish).